Consider the following 700-residue polypeptide: Methionine--tRNA ligase (700 aa).

The short motif at 14–24 (PYANGPVHLGH) is the 'HIGH' region element. Residues Cys146, Cys149, Cys159, and Cys162 each contribute to the Zn(2+) site. Positions 344-348 (KFSKS) match the 'KMSKS' region motif. Residue Lys347 coordinates ATP. Residues 599-700 (DFLKVDLRVA…GEEINGRQIQ (102 aa)) enclose the tRNA-binding domain.

The protein belongs to the class-I aminoacyl-tRNA synthetase family. MetG type 1 subfamily. As to quaternary structure, homodimer. Requires Zn(2+) as cofactor.

It localises to the cytoplasm. It carries out the reaction tRNA(Met) + L-methionine + ATP = L-methionyl-tRNA(Met) + AMP + diphosphate. Its function is as follows. Is required not only for elongation of protein synthesis but also for the initiation of all mRNA translation through initiator tRNA(fMet) aminoacylation. The chain is Methionine--tRNA ligase from Pelodictyon phaeoclathratiforme (strain DSM 5477 / BU-1).